An 878-amino-acid polypeptide reads, in one-letter code: Alanine--tRNA ligase (878 aa).

Zn(2+) contacts are provided by histidine 567, histidine 571, cysteine 669, and histidine 673. Residues 841 to 860 form a disordered region; sequence AVGGKGGGRPDMAEAGGKDP.

The protein belongs to the class-II aminoacyl-tRNA synthetase family. Zn(2+) is required as a cofactor.

The protein localises to the cytoplasm. The enzyme catalyses tRNA(Ala) + L-alanine + ATP = L-alanyl-tRNA(Ala) + AMP + diphosphate. In terms of biological role, catalyzes the attachment of alanine to tRNA(Ala) in a two-step reaction: alanine is first activated by ATP to form Ala-AMP and then transferred to the acceptor end of tRNA(Ala). Also edits incorrectly charged Ser-tRNA(Ala) and Gly-tRNA(Ala) via its editing domain. This is Alanine--tRNA ligase from Solibacter usitatus (strain Ellin6076).